A 248-amino-acid polypeptide reads, in one-letter code: Putative eukaryotic initiation factor 4A-like protein (248 aa).

A Q motif motif is present at residues 14–42 (VGFASLGLNEQLINNIKRYGITKLTPFQM). Residues 45 to 239 (IKEIKENSNV…NTFIKIPKII (195 aa)) enclose the Helicase ATP-binding domain. 58–65 (SIEGTGRT) lines the ATP pocket. The DEAD box motif lies at 185–188 (DELD).

It belongs to the DEAD box helicase family. eIF4A subfamily.

The sequence is that of Putative eukaryotic initiation factor 4A-like protein from Dictyostelium discoideum (Social amoeba).